A 427-amino-acid chain; its full sequence is Enolase (427 aa).

Residue Q163 participates in (2R)-2-phosphoglycerate binding. E205 functions as the Proton donor in the catalytic mechanism. Mg(2+)-binding residues include D242, E285, and D312. Residues K337, R366, S367, and K388 each coordinate (2R)-2-phosphoglycerate. Residue K337 is the Proton acceptor of the active site.

This sequence belongs to the enolase family. Mg(2+) is required as a cofactor.

The protein resides in the cytoplasm. It is found in the secreted. It localises to the cell surface. It catalyses the reaction (2R)-2-phosphoglycerate = phosphoenolpyruvate + H2O. It participates in carbohydrate degradation; glycolysis; pyruvate from D-glyceraldehyde 3-phosphate: step 4/5. Catalyzes the reversible conversion of 2-phosphoglycerate (2-PG) into phosphoenolpyruvate (PEP). It is essential for the degradation of carbohydrates via glycolysis. The sequence is that of Enolase from Methylocella silvestris (strain DSM 15510 / CIP 108128 / LMG 27833 / NCIMB 13906 / BL2).